The primary structure comprises 294 residues: Protein C3orf33 homolog (294 aa).

The residue at position 2 (alanine 2) is an N-acetylalanine. A helical transmembrane segment spans residues leucine 36–isoleucine 53. Residues lysine 244–serine 271 form a disordered region.

The protein localises to the membrane. Its function is as follows. May play a role in transcription regulation. This is Protein C3orf33 homolog from Mus musculus (Mouse).